The chain runs to 305 residues: Shiftless antiviral inhibitor of ribosomal frameshifting protein homolog (305 aa).

The short motif at 141–157 (RRVPQRKEVSRCQRCRK) is the Nuclear localization signal element. The short motif at 279 to 288 (NENDIDDIIL) is the Nuclear export signal element.

Belongs to the SHFL family.

The protein resides in the cytoplasm. It is found in the nucleus. Its subcellular location is the P-body. Inhibits programmed -1 ribosomal frameshifting (-1PRF) of a variety of mRNAs from viruses and cellular genes. Interacts with the -1PRF signal of target mRNA and translating ribosomes and causes premature translation termination at the frameshifting site. May exhibit antiviral activity. The protein is Shiftless antiviral inhibitor of ribosomal frameshifting protein homolog (shfl) of Xenopus laevis (African clawed frog).